The sequence spans 157 residues: Large ribosomal subunit protein eL29 (157 aa).

Positions 1 to 26 are enriched in basic residues; it reads MAKSKNHTTHNQSRKWHRNGIKKPRS. The interval 1 to 32 is disordered; sequence MAKSKNHTTHNQSRKWHRNGIKKPRSQRYESL. An N6-methyllysine modification is found at Lys-5. Position 31 is a phosphoserine (Ser-31). Position 33 is an N6-acetyllysine (Lys-33). Residues 121–157 are disordered; the sequence is PKAKAKAKDQTKAQAAAPASIPAQAPKGAQATTKATE. Positions 132 to 147 are enriched in low complexity; that stretch reads KAQAAAPASIPAQAPK. The residue at position 140 (Ser-140) is a Phosphoserine.

The protein belongs to the eukaryotic ribosomal protein eL29 family. Component of the large ribosomal subunit.

Its subcellular location is the cytoplasm. Component of the large ribosomal subunit. The ribosome is a large ribonucleoprotein complex responsible for the synthesis of proteins in the cell. This Macaca fascicularis (Crab-eating macaque) protein is Large ribosomal subunit protein eL29 (RPL29).